The following is a 719-amino-acid chain: Fatty acid oxidation complex subunit alpha (719 aa).

An enoyl-CoA hydratase/isomerase region spans residues 1 to 190; the sequence is MIYQGNRITV…KLGLVDAVVA (190 aa). A substrate-binding site is contributed by aspartate 298. Positions 313–719 are 3-hydroxyacyl-CoA dehydrogenase; the sequence is HDINEAAVLG…AAGETFYPKA (407 aa). Residues methionine 326, aspartate 345, 402–404, lysine 409, and serine 431 each bind NAD(+); that span reads VVE. Histidine 452 functions as the For 3-hydroxyacyl-CoA dehydrogenase activity in the catalytic mechanism. Asparagine 455 is an NAD(+) binding site. Asparagine 502 contributes to the substrate binding site.

It in the N-terminal section; belongs to the enoyl-CoA hydratase/isomerase family. The protein in the C-terminal section; belongs to the 3-hydroxyacyl-CoA dehydrogenase family. Heterotetramer of two alpha chains (FadB) and two beta chains (FadA).

It catalyses the reaction a (3S)-3-hydroxyacyl-CoA + NAD(+) = a 3-oxoacyl-CoA + NADH + H(+). The catalysed reaction is a (3S)-3-hydroxyacyl-CoA = a (2E)-enoyl-CoA + H2O. The enzyme catalyses a 4-saturated-(3S)-3-hydroxyacyl-CoA = a (3E)-enoyl-CoA + H2O. It carries out the reaction (3S)-3-hydroxybutanoyl-CoA = (3R)-3-hydroxybutanoyl-CoA. It catalyses the reaction a (3Z)-enoyl-CoA = a 4-saturated (2E)-enoyl-CoA. The catalysed reaction is a (3E)-enoyl-CoA = a 4-saturated (2E)-enoyl-CoA. It functions in the pathway lipid metabolism; fatty acid beta-oxidation. Involved in the aerobic and anaerobic degradation of long-chain fatty acids via beta-oxidation cycle. Catalyzes the formation of 3-oxoacyl-CoA from enoyl-CoA via L-3-hydroxyacyl-CoA. It can also use D-3-hydroxyacyl-CoA and cis-3-enoyl-CoA as substrate. This chain is Fatty acid oxidation complex subunit alpha, found in Psychrobacter sp. (strain PRwf-1).